A 239-amino-acid polypeptide reads, in one-letter code: Pyridoxine 5'-phosphate synthase (239 aa).

Residue asparagine 7 coordinates 3-amino-2-oxopropyl phosphate. Residue 9 to 10 (DH) participates in 1-deoxy-D-xylulose 5-phosphate binding. Residue arginine 18 coordinates 3-amino-2-oxopropyl phosphate. The active-site Proton acceptor is the histidine 43. 1-deoxy-D-xylulose 5-phosphate-binding residues include arginine 45 and histidine 50. Glutamate 70 acts as the Proton acceptor in catalysis. 1-deoxy-D-xylulose 5-phosphate is bound at residue threonine 100. Histidine 191 acts as the Proton donor in catalysis. Residues glycine 192 and 213–214 (GH) each bind 3-amino-2-oxopropyl phosphate.

The protein belongs to the PNP synthase family. In terms of assembly, homooctamer; tetramer of dimers.

The protein resides in the cytoplasm. It carries out the reaction 3-amino-2-oxopropyl phosphate + 1-deoxy-D-xylulose 5-phosphate = pyridoxine 5'-phosphate + phosphate + 2 H2O + H(+). Its pathway is cofactor biosynthesis; pyridoxine 5'-phosphate biosynthesis; pyridoxine 5'-phosphate from D-erythrose 4-phosphate: step 5/5. Catalyzes the complicated ring closure reaction between the two acyclic compounds 1-deoxy-D-xylulose-5-phosphate (DXP) and 3-amino-2-oxopropyl phosphate (1-amino-acetone-3-phosphate or AAP) to form pyridoxine 5'-phosphate (PNP) and inorganic phosphate. In Geobacter metallireducens (strain ATCC 53774 / DSM 7210 / GS-15), this protein is Pyridoxine 5'-phosphate synthase.